Reading from the N-terminus, the 272-residue chain is Insulin-like growth factor-binding protein 5 (272 aa).

Residues 1–20 (MVLLTAVLLLLAAYAGPAQS) form the signal peptide. The region spanning 23 to 103 (SFVHCEPCDE…LHGRGVCLNE (81 aa)) is the IGFBP N-terminal domain. Intrachain disulfides connect Cys27–Cys53, Cys30–Cys55, Cys38–Cys56, Cys45–Cys59, Cys67–Cys80, and Cys74–Cys100. Over residues 111-122 (KIERDSREHEEP) the composition is skewed to basic and acidic residues. The tract at residues 111 to 130 (KIERDSREHEEPTTSEMAEE) is disordered. Ser116 is modified (phosphoserine; by FAM20C). Thr172 is a glycosylation site (O-linked (HexNAc...) threonine). Residues 189–263 (QGPCRRHMEA…MEYVDGDFQC (75 aa)) enclose the Thyroglobulin type-1 domain. Disulfide bonds link Cys192–Cys219, Cys230–Cys241, and Cys243–Cys263.

As to quaternary structure, interacts with IGF1; this interaction enhances the growth stimulatory effects of IGF1 on fibroblasts. Interacts with CAV1; this interaction allows trafficking of IGFBP5 from the plasma membrane to the nucleus. Interacts with NCL; this interaction is necessary for IGFBP5 localization to the nucleus. Post-translationally, cleaved by C1S in extracellular space. Osteosarcoma, and at lower levels in liver, kidney and brain.

Its subcellular location is the secreted. It localises to the cytoplasm. The protein resides in the nucleus. Multifunctional protein that plays a critical role in regulating the availability of IGFs to their receptors and thereby regulates IGF-mediated cellular processes including proliferation, differentiation, and apoptosis in a cell-type specific manner. Increases the cell proliferation of osteoblasts, intestinal smooth muscle cells and neuroblastoma cells. Enhances adhesion and survival of epithelial cells but decreases adhesion of mesenchymal cells. Once secreted, acts as a major mediator of mTORC1-dependent feedback inhibition of IGF1 signaling. Also plays a role in the induction of extracellular matrix (ECM) production and deposition independently of its nuclear translocation and binding to IGFs. Acts itself as a growth factor that can act independently of IGFs to regulate bone formation. Acts as a ligand for the ROR1 receptor which triggers formation of ROR1/HER2 heterodimer to enhance CREB oncogenic signaling. The protein is Insulin-like growth factor-binding protein 5 (IGFBP5) of Homo sapiens (Human).